Reading from the N-terminus, the 228-residue chain is UPF0173 metal-dependent hydrolase Dred_1740 (228 aa).

Belongs to the UPF0173 family.

The sequence is that of UPF0173 metal-dependent hydrolase Dred_1740 from Desulforamulus reducens (strain ATCC BAA-1160 / DSM 100696 / MI-1) (Desulfotomaculum reducens).